Here is a 308-residue protein sequence, read N- to C-terminus: Isoaspartyl peptidase/L-asparaginase (308 aa).

N-acetylmethionine is present on Met1. The active-site Nucleophile is the Thr168. Residues 196–199 (RVGD) and 219–222 (TGHG) contribute to the substrate site.

This sequence belongs to the Ntn-hydrolase family. Heterodimer of an alpha and beta chain produced by autocleavage. This heterodimer may then dimerize in turn, giving rise to a heterotetramer. In terms of processing, cleaved into an alpha and beta chain by autocatalysis; this activates the enzyme. The N-terminal residue of the beta subunit is responsible for the nucleophile hydrolase activity. Expressed in brain, kidney, testis and tissues of the gastrointestinal tract. Present in sperm (at protein level). Over-expressed in uterine, mammary, prostatic and ovarian carcinoma.

The protein localises to the cytoplasm. It carries out the reaction L-asparagine + H2O = L-aspartate + NH4(+). The enzyme catalyses Cleavage of a beta-linked Asp residue from the N-terminus of a polypeptide.. Its activity is regulated as follows. Glycine accelerates autocleavage into an alpha and beta chain. In terms of biological role, has both L-asparaginase and beta-aspartyl peptidase activity. May be involved in the production of L-aspartate, which can act as an excitatory neurotransmitter in some brain regions. Is highly active with L-Asp beta-methyl ester. Besides, has catalytic activity toward beta-aspartyl dipeptides and their methyl esters, including beta-L-Asp-L-Phe, beta-L-Asp-L-Phe methyl ester (aspartame), beta-L-Asp-L-Ala, beta-L-Asp-L-Leu and beta-L-Asp-L-Lys. Does not have aspartylglucosaminidase activity and is inactive toward GlcNAc-L-Asn. Likewise, has no activity toward glutamine. The polypeptide is Isoaspartyl peptidase/L-asparaginase (ASRGL1) (Homo sapiens (Human)).